A 142-amino-acid chain; its full sequence is Coactosin-like protein (142 aa).

Ala2 is modified (N-acetylalanine). An ADF-H domain is found at 2 to 130; sequence ATKIDKEACR…EEDFIKNELK (129 aa). Positions 66-75 are flexible and important for F-actin binding; the sequence is TGDAMSKRSK. An N6-acetyllysine mark is found at Lys102 and Lys126.

Belongs to the actin-binding proteins ADF family. Coactosin subfamily. Interacts with 5-lipoxygenase (ALOX5/5LO) in a calcium-independent manner. Binds to F-actin with a stoichiometry of 1:2.

The protein resides in the cytoplasm. The protein localises to the cytoskeleton. Its subcellular location is the nucleus. In terms of biological role, binds to F-actin in a calcium-independent manner. Has no direct effect on actin depolymerization. Acts as a chaperone for ALOX5 (5LO), influencing both its stability and activity in leukotrienes synthesis. This Bos taurus (Bovine) protein is Coactosin-like protein (COTL1).